The chain runs to 308 residues: Very-long-chain enoyl-CoA reductase (308 aa).

Residues 1–86 lie on the Cytoplasmic side of the membrane; the sequence is MKHYEVEIRD…YFRDLGAQIS (86 aa). An N6-acetyllysine modification is found at Lys-22. Phosphoserine is present on Ser-58. Lys-60 is modified (N6-acetyllysine). Residues 87–106 form a helical membrane-spanning segment; sequence WVTVFLTEYAGPLFIYLLFY. Topologically, residues 107–124 are lumenal; sequence FRVPFIYGRKYDFTSSRH. A helical membrane pass occupies residues 125–147; that stretch reads TVVHLACMCHSFHYIKRLLETLF. The Cytoplasmic portion of the chain corresponds to 148 to 158; sequence VHRFSHGTMPL. Residues 159-180 form a helical membrane-spanning segment; sequence RNIFKNCTYYWGFAAWMAYYIN. Topologically, residues 181–189 are lumenal; that stretch reads HPLYTPPTY. The chain crosses the membrane as a helical span at residues 190–216; that stretch reads GVQQVKLALAVFVICQLGNFSIHMALR. Over 217-245 the chain is Cytoplasmic; sequence DLRPAGSKTRKIPYPTKNPFTWLFLLVSC. The helical transmembrane segment at 246–262 threads the bilayer; sequence PNYTYEVGSWIGFAILT. The Lumenal portion of the chain corresponds to 263 to 264; sequence QC. Residues 265 to 292 form a helical membrane-spanning segment; it reads VPVALFSLVGFTQMTIWAKGKHRSYLKE. Residues 293–308 lie on the Cytoplasmic side of the membrane; sequence FRDYPPLRMPIIPFLL.

Belongs to the steroid 5-alpha reductase family. In terms of assembly, interacts with ELOVL1 and LASS2. Glycosylated.

Its subcellular location is the endoplasmic reticulum membrane. It carries out the reaction a very-long-chain 2,3-saturated fatty acyl-CoA + NADP(+) = a very-long-chain (2E)-enoyl-CoA + NADPH + H(+). It catalyses the reaction octadecanoyl-CoA + NADP(+) = (2E)-octadecenoyl-CoA + NADPH + H(+). The catalysed reaction is (2E,7Z,10Z,13Z,16Z)-docosapentaenoyl-CoA + NADPH + H(+) = (7Z,10Z,13Z,16Z)-docosatetraenoyl-CoA + NADP(+). The enzyme catalyses (2E,7Z,10Z,13Z,16Z,19Z)-docosahexaenoyl-CoA + NADPH + H(+) = (7Z,10Z,13Z,16Z,19Z)-docosapentaenoyl-CoA + NADP(+). It carries out the reaction (2E,8Z,11Z,14Z)-eicosatetraenoyl-CoA + NADPH + H(+) = (8Z,11Z,14Z)-eicosatrienoyl-CoA + NADP(+). It catalyses the reaction (2E)-hexadecenoyl-CoA + NADPH + H(+) = hexadecanoyl-CoA + NADP(+). It functions in the pathway lipid metabolism; fatty acid biosynthesis. It participates in lipid metabolism; sphingolipid metabolism. Functionally, involved in both the production of very long-chain fatty acids for sphingolipid synthesis and the degradation of the sphingosine moiety in sphingolipids through the sphingosine 1-phosphate metabolic pathway. Catalyzes the last of the four reactions of the long-chain fatty acids elongation cycle. This endoplasmic reticulum-bound enzymatic process, allows the addition of 2 carbons to the chain of long- and very long-chain fatty acids/VLCFAs per cycle. This enzyme reduces the trans-2,3-enoyl-CoA fatty acid intermediate to an acyl-CoA that can be further elongated by entering a new cycle of elongation. Thereby, it participates in the production of VLCFAs of different chain lengths that are involved in multiple biological processes as precursors of membrane lipids and lipid mediators. Catalyzes the saturation step of the sphingosine 1-phosphate metabolic pathway, the conversion of trans-2-hexadecenoyl-CoA to palmitoyl-CoA. In Mus musculus (Mouse), this protein is Very-long-chain enoyl-CoA reductase (Tecr).